A 124-amino-acid polypeptide reads, in one-letter code: Probable cytochrome b5 1 (124 aa).

The region spanning 3-79 (VKYFEPEEIV…LEEMYIGDLK (77 aa)) is the Cytochrome b5 heme-binding domain. Residues His38 and His62 each coordinate heme. The chain crosses the membrane as a helical span at residues 100–120 (PPLPLLIALIVLPAIAVIVFV).

Belongs to the cytochrome b5 family.

It localises to the endoplasmic reticulum membrane. The protein localises to the microsome membrane. In terms of biological role, membrane bound hemoprotein which function as an electron carrier for several membrane bound oxygenases. This chain is Probable cytochrome b5 1, found in Schizosaccharomyces pombe (strain 972 / ATCC 24843) (Fission yeast).